The primary structure comprises 206 residues: A-type ATP synthase subunit E (206 aa).

It belongs to the V-ATPase E subunit family. Has multiple subunits with at least A(3), B(3), C, D, E, F, H, I and proteolipid K(x).

The protein localises to the cell membrane. In terms of biological role, component of the A-type ATP synthase that produces ATP from ADP in the presence of a proton gradient across the membrane. The polypeptide is A-type ATP synthase subunit E (Methanothermobacter thermautotrophicus (strain ATCC 29096 / DSM 1053 / JCM 10044 / NBRC 100330 / Delta H) (Methanobacterium thermoautotrophicum)).